An 88-amino-acid polypeptide reads, in one-letter code: Small ribosomal subunit protein uS15 (88 aa).

A compositionally biased stretch (polar residues) spans methionine 1–alanine 12. The tract at residues methionine 1–serine 23 is disordered.

This sequence belongs to the universal ribosomal protein uS15 family. In terms of assembly, part of the 30S ribosomal subunit. Forms a bridge to the 50S subunit in the 70S ribosome, contacting the 23S rRNA.

In terms of biological role, one of the primary rRNA binding proteins, it binds directly to 16S rRNA where it helps nucleate assembly of the platform of the 30S subunit by binding and bridging several RNA helices of the 16S rRNA. Functionally, forms an intersubunit bridge (bridge B4) with the 23S rRNA of the 50S subunit in the ribosome. The sequence is that of Small ribosomal subunit protein uS15 from Psychrobacter sp. (strain PRwf-1).